The sequence spans 1052 residues: Multidrug resistance protein MdtB (1052 aa).

11 helical membrane passes run L15 to G37, F345 to L362, A367 to L389, L396 to N418, G438 to F460, F472 to M494, H535 to I557, L867 to I889, L909 to V931, I968 to A990, and M1000 to F1022. Positions K1032 to Q1052 are disordered.

This sequence belongs to the resistance-nodulation-cell division (RND) (TC 2.A.6) family. MdtB subfamily. As to quaternary structure, part of a tripartite efflux system composed of MdtA, MdtB and MdtC. MdtB forms a heteromultimer with MdtC.

Its subcellular location is the cell inner membrane. In Yersinia pestis, this protein is Multidrug resistance protein MdtB.